Here is a 299-residue protein sequence, read N- to C-terminus: Bifunctional protein FolD 1 (299 aa).

Residues 168-170, serine 193, and isoleucine 234 contribute to the NADP(+) site; that span reads GRS.

This sequence belongs to the tetrahydrofolate dehydrogenase/cyclohydrolase family. In terms of assembly, homodimer.

It catalyses the reaction (6R)-5,10-methylene-5,6,7,8-tetrahydrofolate + NADP(+) = (6R)-5,10-methenyltetrahydrofolate + NADPH. The catalysed reaction is (6R)-5,10-methenyltetrahydrofolate + H2O = (6R)-10-formyltetrahydrofolate + H(+). The protein operates within one-carbon metabolism; tetrahydrofolate interconversion. Its function is as follows. Catalyzes the oxidation of 5,10-methylenetetrahydrofolate to 5,10-methenyltetrahydrofolate and then the hydrolysis of 5,10-methenyltetrahydrofolate to 10-formyltetrahydrofolate. The chain is Bifunctional protein FolD 1 from Mesorhizobium japonicum (strain LMG 29417 / CECT 9101 / MAFF 303099) (Mesorhizobium loti (strain MAFF 303099)).